A 401-amino-acid polypeptide reads, in one-letter code: Argininosuccinate synthase (401 aa).

ATP is bound by residues alanine 7–serine 15 and alanine 34. L-citrulline contacts are provided by tyrosine 85 and serine 90. Glycine 115 contacts ATP. The L-aspartate site is built by threonine 117, asparagine 121, and aspartate 122. Asparagine 121 serves as a coordination point for L-citrulline. Arginine 125, serine 174, serine 183, glutamate 259, and tyrosine 271 together coordinate L-citrulline.

The protein belongs to the argininosuccinate synthase family. Type 1 subfamily. Homotetramer.

Its subcellular location is the cytoplasm. The catalysed reaction is L-citrulline + L-aspartate + ATP = 2-(N(omega)-L-arginino)succinate + AMP + diphosphate + H(+). Its pathway is amino-acid biosynthesis; L-arginine biosynthesis; L-arginine from L-ornithine and carbamoyl phosphate: step 2/3. The sequence is that of Argininosuccinate synthase from Desulforamulus reducens (strain ATCC BAA-1160 / DSM 100696 / MI-1) (Desulfotomaculum reducens).